A 337-amino-acid polypeptide reads, in one-letter code: Probable phospholipase A1 magnifin (337 aa).

A signal peptide spans 1 to 21; it reads MNLKYLLLFFCLVQVLHYCYS. The propeptide occupies 22–33; that stretch reads HGDPSLSNELDR. A disulfide bond links cysteine 39 and cysteine 123. The active-site Nucleophile is the serine 173. The active-site Charge relay system is aspartate 201. Intrachain disulfides connect cysteine 212/cysteine 217 and cysteine 255/cysteine 264. Histidine 266 acts as the Charge relay system in catalysis. Intrachain disulfides connect cysteine 281–cysteine 305, cysteine 282–cysteine 330, and cysteine 298–cysteine 303.

It belongs to the AB hydrolase superfamily. Lipase family. In terms of tissue distribution, expressed by the venom gland.

It is found in the secreted. The catalysed reaction is a 1,2-diacyl-sn-glycero-3-phosphocholine + H2O = a 2-acyl-sn-glycero-3-phosphocholine + a fatty acid + H(+). Functionally, catalyzes the hydrolysis of phosphatidylcholine with phospholipase A1 activity. May act as an allergen and induce hemolytic activity. In vivo, induces dose-dependent platelet aggregation (nanomolar concentration) and induces thrombosis. This is Probable phospholipase A1 magnifin from Vespa magnifica (Hornet).